The sequence spans 63 residues: Large ribosomal subunit protein bL28 (63 aa).

This sequence belongs to the bacterial ribosomal protein bL28 family.

The polypeptide is Large ribosomal subunit protein bL28 (Desulfosudis oleivorans (strain DSM 6200 / JCM 39069 / Hxd3) (Desulfococcus oleovorans)).